Consider the following 237-residue polypeptide: Large ribosomal subunit protein uL1 (237 aa).

This sequence belongs to the universal ribosomal protein uL1 family. In terms of assembly, part of the 50S ribosomal subunit.

Its function is as follows. Binds directly to 23S rRNA. The L1 stalk is quite mobile in the ribosome, and is involved in E site tRNA release. In terms of biological role, protein L1 is also a translational repressor protein, it controls the translation of the L11 operon by binding to its mRNA. In Corynebacterium kroppenstedtii (strain DSM 44385 / JCM 11950 / CIP 105744 / CCUG 35717), this protein is Large ribosomal subunit protein uL1.